The following is a 149-amino-acid chain: Calmodulin-1 (149 aa).

An N-acetylalanine modification is found at Ala-2. 4 consecutive EF-hand domains span residues 8–43, 44–79, 81–116, and 117–149; these read EQIAEFKEAFSLFDKDGDGTITTKELGTVMRSLGQN, PTEAELQDMINEVDADGNGTIDFPEFLTMMARKMKD, DSEEEIREAFRVFDKDGNGYISAAELRHVMTNLGEK, and LTDEEVDEMIREADIDGDGQVNYEEFVQMMTAK. Asp-21 lines the Ca(2+) pocket. Lys-22 is modified (N6-acetyllysine; alternate). Residue Lys-22 forms a Glycyl lysine isopeptide (Lys-Gly) (interchain with G-Cter in SUMO2); alternate linkage. Lys-22 is covalently cross-linked (Glycyl lysine isopeptide (Lys-Gly) (interchain with G-Cter in ubiquitin); alternate). 4 residues coordinate Ca(2+): Asp-23, Asp-25, Thr-27, and Glu-32. Thr-45 carries the post-translational modification Phosphothreonine; by CaMK4. 5 residues coordinate Ca(2+): Asp-57, Asp-59, Asn-61, Thr-63, and Glu-68. The interval 77–149 is necessary and sufficient for interaction with PCP4; sequence MKDTDSEEEI…EEFVQMMTAK (73 aa). Ser-82 carries the post-translational modification Phosphoserine. Asp-94 is a Ca(2+) binding site. Lys-95 is subject to N6-acetyllysine. Positions 96, 98, and 100 each coordinate Ca(2+). Position 100 is a phosphotyrosine (Tyr-100). Ser-102 is subject to Phosphoserine. Glu-105 is a Ca(2+) binding site. Position 111 is a phosphothreonine (Thr-111). An N6,N6,N6-trimethyllysine; alternate modification is found at Lys-116. Lys-116 is subject to N6-methyllysine; alternate. Asp-130, Asp-132, Asp-134, and Gln-136 together coordinate Ca(2+). Tyr-139 is modified (phosphotyrosine). Ca(2+) is bound at residue Glu-141.

The protein belongs to the calmodulin family. Homotetramer. Interacts with MYO1C, MYO5A and RRAD. Interacts with MYO10. Interacts with CEP97, CCP110, TTN/titin and SRY. Interacts with USP6; the interaction is calcium dependent. Interacts with CDK5RAP2. Interacts with SCN5A. Interacts with RYR1. Interacts with FCHO1. Interacts with MIP in a 1:2 stoichiometry; the interaction with the cytoplasmic domains from two MIP subunits promotes MIP water channel closure. Interacts with ORAI1; this may play a role in the regulation of ORAI1-mediated calcium transport. Interacts with IQCF1. Interacts with SYT7. Interacts with CEACAM1 (via cytoplasmic domain); this interaction is in a calcium dependent manner and reduces homophilic cell adhesion through dissociation of dimer. Interacts with RYR2; regulates RYR2 calcium-release channel activity. Interacts with PCP4; regulates calmodulin calcium-binding. Interacts with the heterotetrameric KCNQ2 and KCNQ3 channel; the interaction is calcium-independent, constitutive and participates in the proper assembly of a functional heterotetrameric M channel. Interacts with alpha-synuclein/SNCA. Interacts with SLC9A1 in a calcium-dependent manner. In the absence of Ca(+2), interacts with GIMAP4 (via IQ domain). Interacts with SCN8A; the interaction modulates the inactivation rate of SCN8A. Interaction with KIF1A; the interaction is increased in presence of calcium and increases neuronal dense core vesicles motility. Interacts with KCNN3. Interacts with KCNQ1 (via C-terminus); forms a heterooctameric structure (with 4:4 KCNQ1:CALM stoichiometry) in a calcium-independent manner. Interacts with PIK3C3; the interaction modulates PIK3C3 kinase activity. Interacts with HINT1; interaction increases in the presence of calcium ions. Interacts with HINT3. Interacts with GARIN2; in mature sperm flagella. Interacts with IQUB. Interacts with SLC26A5 (via STAS domain); this interaction is calcium-dependent and the STAS domain interacts with only one lobe of CALM which is an elongated conformation. Ca(2+)-bound CALM1 binds CNGA1:CNGB1 channel (via CaM1 and CaM2 regions); this interaction modulates the affinity of the channel for cNMPs in response to intracellular Ca(2+) levels. Interacts with ITPR1; this interaction inhibits inositol 1,4,5 trisphosphate binding in both the presence and absence of calcium and 1,4,5 trisphosphate-induced calcium release in the presence of calcium. Component of the SIFI complex. Interacts with KCNN4; this interaction allows channel opening. Interacts with KCNN2; this interaction regulates the channel activity through calcium-binding. As to quaternary structure, (Microbial infection) Interacts with Rubella virus protease/methyltransferase p150. In terms of assembly, (Microbial infection) Interacts with Legionella pneumophila glutamylase SidJ. (Microbial infection) Interacts with C.violaceum CopC. C.violaceum CopC interacts specifically with the apo form of calmodulin. As to quaternary structure, (Microbial infection) Interacts with S.flexneri OspC1 and OspC3. S.flexneri OspC1 and OspC3 interact specifically with the apo form of calmodulin and prevents calcium-binding. In terms of processing, ubiquitination results in a strongly decreased activity. Post-translationally, phosphorylation results in a decreased activity.

The protein localises to the cytoplasm. Its subcellular location is the cytoskeleton. It is found in the spindle. It localises to the spindle pole. The protein resides in the microtubule organizing center. The protein localises to the centrosome. Its subcellular location is the cell projection. It is found in the cilium. It localises to the flagellum. With respect to regulation, (Microbial infection) Inactivated by S.flexneri OspC1 and OspC3 proteins, which specifically bind the apo-form of calmodulin, thereby preventing calcium-binding and activity. Functionally, calmodulin acts as part of a calcium signal transduction pathway by mediating the control of a large number of enzymes, ion channels, aquaporins and other proteins through calcium-binding. Calcium-binding is required for the activation of calmodulin. Among the enzymes to be stimulated by the calmodulin-calcium complex are a number of protein kinases, such as myosin light-chain kinases and calmodulin-dependent protein kinase type II (CaMK2), and phosphatases. Together with CCP110 and centrin, is involved in a genetic pathway that regulates the centrosome cycle and progression through cytokinesis. Is a regulator of voltage-dependent L-type calcium channels. Mediates calcium-dependent inactivation of CACNA1C. Positively regulates calcium-activated potassium channel activity of KCNN2. Forms a potassium channel complex with KCNQ1 and regulates electrophysiological activity of the channel via calcium-binding. Acts as a sensor to modulate the endoplasmic reticulum contacts with other organelles mediated by VMP1:ATP2A2. (Microbial infection) Required for Legionella pneumophila SidJ glutamylase activity. In terms of biological role, (Microbial infection) Required for C.violaceum CopC and S.flexneri OspC3 arginine ADP-riboxanase activity. The chain is Calmodulin-1 from Homo sapiens (Human).